Reading from the N-terminus, the 418-residue chain is Glutamyl-tRNA reductase (418 aa).

Substrate is bound by residues 49-52, Ser109, 114-116, and Gln120; these read TCNR and EPQ. The active-site Nucleophile is the Cys50. An NADP(+)-binding site is contributed by 189–194; that stretch reads GAGETI.

Belongs to the glutamyl-tRNA reductase family. Homodimer.

It catalyses the reaction (S)-4-amino-5-oxopentanoate + tRNA(Glu) + NADP(+) = L-glutamyl-tRNA(Glu) + NADPH + H(+). The protein operates within porphyrin-containing compound metabolism; protoporphyrin-IX biosynthesis; 5-aminolevulinate from L-glutamyl-tRNA(Glu): step 1/2. In terms of biological role, catalyzes the NADPH-dependent reduction of glutamyl-tRNA(Glu) to glutamate 1-semialdehyde (GSA). In Shigella flexneri, this protein is Glutamyl-tRNA reductase.